The sequence spans 996 residues: MAAFPRFRFLAIAVIFHFAYIFSIFDIYFVSPIETGMRLFNVQRPPNRSAPADRLVLFVGDGLRADKALQSHPEPYPKSDADLTPRPLAPYLRSKILEQGTFGVSHTRVPTESRPGHVALIAGLYEDVSAVTTGWKLNPVNFDSLFNRSRHTWSWGSPDILPMFEQGAVPGRVDAYTYGHEFEDFSSDATQLDLWVFDHVKDFFAEARRNKTLAEALRQDKIVFFLHLLGLDTTGHSYRPYSKEYLNNIKIVDQGVKEVAELFRDFYRDGRTAFVFTADHGMSDWGSHGDGHPDNTRTPLIVWGSGVAKPQLYPGEVAPGHDEYSADWNLDHVRRHDVAQADVAALMSYLVGVEFPANSVGELPLSYLAADIKEKAEASLVNVQGILEQYRVKEEKKKATELKYRPYQPFGENGLSPERRVAEIRQLIDAGRYEEAIEESAALMKVGLGGLRYLQTYDWLFLRALITIGYLGWIAYALTTVVDLHVLHGRVRPSRTLGGGLFFTSVLVALYASLVISKSPLTYYVYAFFPVFFWEEVYAHRESLAAGRKELLGHINSGGSVASFVLNSALYVGVIESLALGYIHREILSVLFVLGSFWPFTHGLSFLKKHGALSATWFLACIAMSTFTLLPAMKAENVNLITIGGVLMVVIGLLYLIFEDFVLADFSWNAKPTSRNHLSRSLVGIQVGLTVLSIIITRSSALSLQAKQGLPRGNQIMGWVTLVASLLMPLAYRLRPNNHYMHRILVIFLTCAPTFVILTISYEGLFYLVFSALLVSWVRLEHAVQKFTSSKAPQTAATKKPTTTTESHLPAPFRPLTLHDARVALFFFILLQSAFFSTGNVASVSSFSLDSVYRLIPIFDPFSQGAMLILKLMIPFALISANLGILNKRLGVAPSALFMVVMGISDILTLYFFWVVKDEGSWLEIGSTISHFVIASLLCVFVSALEPVSAAFIAGVEVGEESELKEEGKVAEKVVEKVNEAVEGLVSGGDGGGDES.

Topologically, residues 1–8 are cytoplasmic; it reads MAAFPRFR. A helical membrane pass occupies residues 9-29; it reads FLAIAVIFHFAYIFSIFDIYF. At 30–463 the chain is on the lumenal side; the sequence is VSPIETGMRL…LQTYDWLFLR (434 aa). N-linked (GlcNAc...) asparagine glycans are attached at residues asparagine 47, asparagine 147, and asparagine 210. Residues 464 to 484 traverse the membrane as a helical segment; the sequence is ALITIGYLGWIAYALTTVVDL. Topologically, residues 485-495 are cytoplasmic; that stretch reads HVLHGRVRPSR. The helical transmembrane segment at 496-516 threads the bilayer; it reads TLGGGLFFTSVLVALYASLVI. Topologically, residues 517–518 are lumenal; sequence SK. The helical transmembrane segment at 519-539 threads the bilayer; sequence SPLTYYVYAFFPVFFWEEVYA. Over 540–560 the chain is Cytoplasmic; that stretch reads HRESLAAGRKELLGHINSGGS. Residues 561–581 form a helical membrane-spanning segment; sequence VASFVLNSALYVGVIESLALG. The Lumenal portion of the chain corresponds to 582 to 586; the sequence is YIHRE. The helical transmembrane segment at 587 to 607 threads the bilayer; it reads ILSVLFVLGSFWPFTHGLSFL. The Cytoplasmic portion of the chain corresponds to 608–612; it reads KKHGA. The helical transmembrane segment at 613–633 threads the bilayer; the sequence is LSATWFLACIAMSTFTLLPAM. The Lumenal segment spans residues 634–637; that stretch reads KAEN. The chain crosses the membrane as a helical span at residues 638 to 658; that stretch reads VNLITIGGVLMVVIGLLYLIF. Topologically, residues 659-681 are cytoplasmic; it reads EDFVLADFSWNAKPTSRNHLSRS. A helical transmembrane segment spans residues 682 to 702; that stretch reads LVGIQVGLTVLSIIITRSSAL. Residues 703–715 lie on the Lumenal side of the membrane; the sequence is SLQAKQGLPRGNQ. A helical membrane pass occupies residues 716 to 734; it reads IMGWVTLVASLLMPLAYRL. Topologically, residues 735–754 are cytoplasmic; that stretch reads RPNNHYMHRILVIFLTCAPT. Residues 755-775 form a helical membrane-spanning segment; it reads FVILTISYEGLFYLVFSALLV. At 776-822 the chain is on the lumenal side; that stretch reads SWVRLEHAVQKFTSSKAPQTAATKKPTTTTESHLPAPFRPLTLHDAR. Residues 823–843 traverse the membrane as a helical segment; sequence VALFFFILLQSAFFSTGNVAS. At 844–865 the chain is on the cytoplasmic side; the sequence is VSSFSLDSVYRLIPIFDPFSQG. The helical transmembrane segment at 866–886 threads the bilayer; that stretch reads AMLILKLMIPFALISANLGIL. At 887 to 895 the chain is on the lumenal side; it reads NKRLGVAPS. The chain crosses the membrane as a helical span at residues 896 to 916; sequence ALFMVVMGISDILTLYFFWVV. Topologically, residues 917-932 are cytoplasmic; that stretch reads KDEGSWLEIGSTISHF. A helical membrane pass occupies residues 933–953; the sequence is VIASLLCVFVSALEPVSAAFI. The Lumenal portion of the chain corresponds to 954 to 996; sequence AGVEVGEESELKEEGKVAEKVVEKVNEAVEGLVSGGDGGGDES.

The protein belongs to the PIGG/PIGN/PIGO family. PIGN subfamily.

It localises to the endoplasmic reticulum membrane. The protein operates within glycolipid biosynthesis; glycosylphosphatidylinositol-anchor biosynthesis. In terms of biological role, ethanolamine phosphate transferase involved in glycosylphosphatidylinositol-anchor biosynthesis. Transfers ethanolamine phosphate to the first alpha-1,4-linked mannose of the glycosylphosphatidylinositol precursor of GPI-anchor. In Neurospora crassa (strain ATCC 24698 / 74-OR23-1A / CBS 708.71 / DSM 1257 / FGSC 987), this protein is GPI ethanolamine phosphate transferase 1 (mcd-4).